The following is a 115-amino-acid chain: Large ribosomal subunit protein bL20c (115 aa).

The protein belongs to the bacterial ribosomal protein bL20 family.

It is found in the plastid. It localises to the organellar chromatophore. Its function is as follows. Binds directly to 23S ribosomal RNA and is necessary for the in vitro assembly process of the 50S ribosomal subunit. It is not involved in the protein synthesizing functions of that subunit. This Paulinella chromatophora protein is Large ribosomal subunit protein bL20c.